The chain runs to 342 residues: Holliday junction branch migration complex subunit RuvB (342 aa).

The segment at 1 to 22 (MTLKPVREVSPGSQEGEERLEQ) is disordered. Residues 1-185 (MTLKPVREVS…FPIQERLGYY (185 aa)) form a large ATPase domain (RuvB-L) region. ATP-binding positions include L24, R25, G66, K69, T70, S71, 132-134 (EDY), R175, Y185, and R222. Mg(2+) is bound at residue T70. The small ATPAse domain (RuvB-S) stretch occupies residues 186–256 (EPTELREIAV…IVETTLERLE (71 aa)). Residues 259–342 (GRGLDAMDRR…RPQGKQGSLI (84 aa)) form a head domain (RuvB-H) region. DNA is bound by residues R295, R314, and R319.

Belongs to the RuvB family. As to quaternary structure, homohexamer. Forms an RuvA(8)-RuvB(12)-Holliday junction (HJ) complex. HJ DNA is sandwiched between 2 RuvA tetramers; dsDNA enters through RuvA and exits via RuvB. An RuvB hexamer assembles on each DNA strand where it exits the tetramer. Each RuvB hexamer is contacted by two RuvA subunits (via domain III) on 2 adjacent RuvB subunits; this complex drives branch migration. In the full resolvosome a probable DNA-RuvA(4)-RuvB(12)-RuvC(2) complex forms which resolves the HJ.

Its subcellular location is the cytoplasm. The catalysed reaction is ATP + H2O = ADP + phosphate + H(+). Functionally, the RuvA-RuvB-RuvC complex processes Holliday junction (HJ) DNA during genetic recombination and DNA repair, while the RuvA-RuvB complex plays an important role in the rescue of blocked DNA replication forks via replication fork reversal (RFR). RuvA specifically binds to HJ cruciform DNA, conferring on it an open structure. The RuvB hexamer acts as an ATP-dependent pump, pulling dsDNA into and through the RuvAB complex. RuvB forms 2 homohexamers on either side of HJ DNA bound by 1 or 2 RuvA tetramers; 4 subunits per hexamer contact DNA at a time. Coordinated motions by a converter formed by DNA-disengaged RuvB subunits stimulates ATP hydrolysis and nucleotide exchange. Immobilization of the converter enables RuvB to convert the ATP-contained energy into a lever motion, pulling 2 nucleotides of DNA out of the RuvA tetramer per ATP hydrolyzed, thus driving DNA branch migration. The RuvB motors rotate together with the DNA substrate, which together with the progressing nucleotide cycle form the mechanistic basis for DNA recombination by continuous HJ branch migration. Branch migration allows RuvC to scan DNA until it finds its consensus sequence, where it cleaves and resolves cruciform DNA. This is Holliday junction branch migration complex subunit RuvB from Anaeromyxobacter sp. (strain Fw109-5).